The primary structure comprises 344 residues: Protein RecA (344 aa).

66–73 (GPESSGKT) contributes to the ATP binding site.

This sequence belongs to the RecA family.

It is found in the cytoplasm. Functionally, can catalyze the hydrolysis of ATP in the presence of single-stranded DNA, the ATP-dependent uptake of single-stranded DNA by duplex DNA, and the ATP-dependent hybridization of homologous single-stranded DNAs. It interacts with LexA causing its activation and leading to its autocatalytic cleavage. This Azoarcus sp. (strain BH72) protein is Protein RecA.